Consider the following 62-residue polypeptide: UPF0337 protein XCC0070 (62 aa).

A disordered region spans residues 32 to 62 (LEGAAEKNIGKVQRKAGELADDVRDATKSTR).

Belongs to the UPF0337 (CsbD) family.

The polypeptide is UPF0337 protein XCC0070 (Xanthomonas campestris pv. campestris (strain ATCC 33913 / DSM 3586 / NCPPB 528 / LMG 568 / P 25)).